Consider the following 93-residue polypeptide: MLKVNEYFNGRVKSIAFQTATLPATVGVMIPGDYEFSTSQHETMTVVSGALSVKLPESESWTRFNAGDRFEIPANATFNLKVAVDTAYLCTYG.

It belongs to the nucleoside phosphorylase PpnP family.

The enzyme catalyses a purine D-ribonucleoside + phosphate = a purine nucleobase + alpha-D-ribose 1-phosphate. It catalyses the reaction adenosine + phosphate = alpha-D-ribose 1-phosphate + adenine. The catalysed reaction is cytidine + phosphate = cytosine + alpha-D-ribose 1-phosphate. It carries out the reaction guanosine + phosphate = alpha-D-ribose 1-phosphate + guanine. The enzyme catalyses inosine + phosphate = alpha-D-ribose 1-phosphate + hypoxanthine. It catalyses the reaction thymidine + phosphate = 2-deoxy-alpha-D-ribose 1-phosphate + thymine. The catalysed reaction is uridine + phosphate = alpha-D-ribose 1-phosphate + uracil. It carries out the reaction xanthosine + phosphate = alpha-D-ribose 1-phosphate + xanthine. Catalyzes the phosphorolysis of diverse nucleosides, yielding D-ribose 1-phosphate and the respective free bases. Can use uridine, adenosine, guanosine, cytidine, thymidine, inosine and xanthosine as substrates. Also catalyzes the reverse reactions. The chain is Pyrimidine/purine nucleoside phosphorylase from Hahella chejuensis (strain KCTC 2396).